The primary structure comprises 98 residues: NADH-ubiquinone oxidoreductase chain 4L (98 aa).

A run of 3 helical transmembrane segments spans residues 1 to 21 (MSLVHINILMAFTMSLTGLLM), 29 to 49 (ALLCLEGMVLSLFILATLTIL), and 61 to 81 (IILLVFAACEAAIGLALLIMI).

It belongs to the complex I subunit 4L family. In terms of assembly, core subunit of respiratory chain NADH dehydrogenase (Complex I) which is composed of 45 different subunits.

The protein localises to the mitochondrion inner membrane. It carries out the reaction a ubiquinone + NADH + 5 H(+)(in) = a ubiquinol + NAD(+) + 4 H(+)(out). Functionally, core subunit of the mitochondrial membrane respiratory chain NADH dehydrogenase (Complex I) which catalyzes electron transfer from NADH through the respiratory chain, using ubiquinone as an electron acceptor. Part of the enzyme membrane arm which is embedded in the lipid bilayer and involved in proton translocation. This chain is NADH-ubiquinone oxidoreductase chain 4L (MT-ND4L), found in Monodon monoceros (Narwhal).